Here is a 588-residue protein sequence, read N- to C-terminus: DNA mismatch repair protein MutL (588 aa).

Belongs to the DNA mismatch repair MutL/HexB family.

Its function is as follows. This protein is involved in the repair of mismatches in DNA. It is required for dam-dependent methyl-directed DNA mismatch repair. May act as a 'molecular matchmaker', a protein that promotes the formation of a stable complex between two or more DNA-binding proteins in an ATP-dependent manner without itself being part of a final effector complex. The polypeptide is DNA mismatch repair protein MutL (Fervidobacterium nodosum (strain ATCC 35602 / DSM 5306 / Rt17-B1)).